Here is a 499-residue protein sequence, read N- to C-terminus: Glycerol kinase (499 aa).

T13 is an ADP binding site. T13, T14, and S15 together coordinate ATP. Sn-glycerol 3-phosphate is bound at residue T13. R17 contributes to the ADP binding site. 4 residues coordinate sn-glycerol 3-phosphate: R83, E84, Y135, and D244. Glycerol contacts are provided by R83, E84, Y135, D244, and Q245. 2 residues coordinate ADP: T266 and G309. ATP is bound by residues T266, G309, Q313, and G410. Residues G410 and N414 each coordinate ADP.

It belongs to the FGGY kinase family. Homotetramer and homodimer (in equilibrium).

It catalyses the reaction glycerol + ATP = sn-glycerol 3-phosphate + ADP + H(+). Its pathway is polyol metabolism; glycerol degradation via glycerol kinase pathway; sn-glycerol 3-phosphate from glycerol: step 1/1. Its activity is regulated as follows. Activated by phosphorylation and inhibited by fructose 1,6-bisphosphate (FBP). In terms of biological role, key enzyme in the regulation of glycerol uptake and metabolism. Catalyzes the phosphorylation of glycerol to yield sn-glycerol 3-phosphate. The sequence is that of Glycerol kinase from Brevibacillus brevis (strain 47 / JCM 6285 / NBRC 100599).